The primary structure comprises 346 residues: tRNA N6-adenosine threonylcarbamoyltransferase (346 aa).

His-111 and His-115 together coordinate Fe cation. Residues 134–138, Asp-167, Gly-180, and Asn-277 contribute to the substrate site; that span reads LVSGG. Asp-305 provides a ligand contact to Fe cation.

It belongs to the KAE1 / TsaD family. Fe(2+) serves as cofactor.

It localises to the cytoplasm. The enzyme catalyses L-threonylcarbamoyladenylate + adenosine(37) in tRNA = N(6)-L-threonylcarbamoyladenosine(37) in tRNA + AMP + H(+). Required for the formation of a threonylcarbamoyl group on adenosine at position 37 (t(6)A37) in tRNAs that read codons beginning with adenine. Is involved in the transfer of the threonylcarbamoyl moiety of threonylcarbamoyl-AMP (TC-AMP) to the N6 group of A37, together with TsaE and TsaB. TsaD likely plays a direct catalytic role in this reaction. This Bordetella parapertussis (strain 12822 / ATCC BAA-587 / NCTC 13253) protein is tRNA N6-adenosine threonylcarbamoyltransferase.